A 151-amino-acid chain; its full sequence is 4-hydroxybenzoyl-CoA thioesterase (151 aa).

Residue Glu-73 is part of the active site. 100 to 102 (FFR) provides a ligand contact to substrate.

This sequence belongs to the thioesterase PaaI family. In terms of assembly, homotetramer.

The enzyme catalyses 4-hydroxybenzoyl-CoA + H2O = 4-hydroxybenzoate + CoA + H(+). It functions in the pathway xenobiotic degradation; 4-chlorobenzoate degradation; 4-hydroxybenzoate from 4-chlorobenzoate: step 3/3. The sequence is that of 4-hydroxybenzoyl-CoA thioesterase from Arthrobacter globiformis.